Consider the following 87-residue polypeptide: HssA/B-like protein 56 (87 aa).

Belongs to the hssA/B family.

The protein is HssA/B-like protein 56 (hssl56) of Dictyostelium discoideum (Social amoeba).